We begin with the raw amino-acid sequence, 320 residues long: MVGYDPKPDGRNNTKFQVAVAGSVSGLVTRALISPFDVIKIRFQLQHERLSRSDPSAKYHGILQASRQILQEEGPTAFWKGHVPAQILSIGYGAVQFLSFEMLTELVHRGSVYDAREFSVHFVCGGLAACMATLTVHPVDVLRTRFAAQGEPKVYNTLRHAVGTMYRSEGPQVFYKGLAPTLIAIFPYAGLQFSCYSSLKHLYKWAIPAEGKKNENLQNLLCGSGAGVISKTLTYPLDLFKKRLQVGGFEHARAAFGQVRRYKGLMDCAKQVLQKEGALGFFKGLSPSLLKAALSTGFMFFSYEFFCNVFHCMNRTASQR.

3 Solcar repeats span residues N13–L106, R116–L202, and N214–V309. Residues A19–I39 form a helical membrane-spanning segment. A Phosphoserine modification is found at S51. 4 helical membrane-spanning segments follow: residues I87–V107, F122–L142, V173–F193, and L220–F240. Residues K241 to V246 carry the Substrate recognition motif. The chain crosses the membrane as a helical span at residues A293–M313.

It belongs to the mitochondrial carrier (TC 2.A.29) family. Expressed in all tissues examined except for placenta. Highest levels in colon, kidney, lung, testis, spleen, and brain.

The protein localises to the mitochondrion membrane. The enzyme catalyses thiamine phosphate(out) + thiamine diphosphate(in) = thiamine phosphate(in) + thiamine diphosphate(out). Functionally, mitochondrial transporter mediating uptake of thiamine diphosphate into mitochondria. It is not clear if the antiporter activity is affected by the membrane potential or by the proton electrochemical gradient. This chain is Mitochondrial thiamine pyrophosphate carrier, found in Homo sapiens (Human).